A 172-amino-acid chain; its full sequence is Adenine phosphoribosyltransferase (172 aa).

Belongs to the purine/pyrimidine phosphoribosyltransferase family. As to quaternary structure, homodimer.

The protein resides in the cytoplasm. It carries out the reaction AMP + diphosphate = 5-phospho-alpha-D-ribose 1-diphosphate + adenine. It functions in the pathway purine metabolism; AMP biosynthesis via salvage pathway; AMP from adenine: step 1/1. In terms of biological role, catalyzes a salvage reaction resulting in the formation of AMP, that is energically less costly than de novo synthesis. This chain is Adenine phosphoribosyltransferase, found in Anaeromyxobacter dehalogenans (strain 2CP-C).